Here is a 360-residue protein sequence, read N- to C-terminus: Cuticle collagen dpy-2 (360 aa).

Triple-helical region stretches follow at residues 123–152 (GERG…PGTT), 174–230 (GPRG…KGRT), and 238–303 (GPPG…PGTC). 2 disordered regions span residues 127-158 (PSGD…ASCI) and 174-360 (GPRG…IRKW). The span at 189 to 198 (GEYGIGGRPG) shows a compositional bias: gly residues. The span at 242 to 258 (DSGLPGPWGPPGSAGMP) shows a compositional bias: low complexity. The segment covering 273 to 288 (PGPPGAPGPGGMPGPN) has biased composition (pro residues).

The protein belongs to the cuticular collagen family. In terms of assembly, collagen polypeptide chains are complexed within the cuticle by disulfide bonds and other types of covalent cross-links.

In terms of biological role, nematode cuticles are composed largely of collagen-like proteins. The cuticle functions both as an exoskeleton and as a barrier to protect the worm from its environment. Mutations in dpy-2 affects the body shape. The polypeptide is Cuticle collagen dpy-2 (dpy-2) (Caenorhabditis elegans).